Here is a 156-residue protein sequence, read N- to C-terminus: Small ribosomal subunit protein uS7 (156 aa).

It belongs to the universal ribosomal protein uS7 family. Part of the 30S ribosomal subunit. Contacts proteins S9 and S11.

Functionally, one of the primary rRNA binding proteins, it binds directly to 16S rRNA where it nucleates assembly of the head domain of the 30S subunit. Is located at the subunit interface close to the decoding center, probably blocks exit of the E-site tRNA. The protein is Small ribosomal subunit protein uS7 of Natranaerobius thermophilus (strain ATCC BAA-1301 / DSM 18059 / JW/NM-WN-LF).